The following is a 280-amino-acid chain: Gastrula zinc finger protein XlCGF46.1 (280 aa).

C2H2-type zinc fingers lie at residues 6–28, 34–56, 62–84, 90–112, 118–140, 146–168, 174–196, 202–224, 230–252, and 258–280; these read FACK…KLMH, FECT…QLIH, FVCP…LLCH, FTCK…KLTH, FICS…QLIH, YVCT…LRTH, FKCE…KVTH, FTCE…QLTH, FKCE…QRFH, and YKCN…ELSH.

The protein belongs to the krueppel C2H2-type zinc-finger protein family.

It localises to the nucleus. In terms of biological role, may be involved in transcriptional regulation. The chain is Gastrula zinc finger protein XlCGF46.1 from Xenopus laevis (African clawed frog).